A 363-amino-acid polypeptide reads, in one-letter code: Protein-arginine kinase (363 aa).

A Phosphagen kinase C-terminal domain is found at Ile-24–Ala-254. ATP contacts are provided by residues Ser-27–Arg-31, His-92, Arg-125, Arg-176–Met-180, and Arg-207–Glu-212. Positions Arg-337–Ala-342 match the RDXXRA motif of the pArg binding pocket involved in allosteric regulation motif.

Belongs to the ATP:guanido phosphotransferase family.

It carries out the reaction L-arginyl-[protein] + ATP = N(omega)-phospho-L-arginyl-[protein] + ADP + H(+). Appears to be allosterically activated by the binding of pArg-containing polypeptides to the pArg-binding pocket localized in the C-terminal domain of McsB. Its function is as follows. Catalyzes the specific phosphorylation of arginine residues in a large number of proteins. Is part of the bacterial stress response system. Protein arginine phosphorylation has a physiologically important role and is involved in the regulation of many critical cellular processes, such as protein homeostasis, motility, competence, and stringent and stress responses, by regulating gene expression and protein activity. The polypeptide is Protein-arginine kinase (Bacillus licheniformis (strain ATCC 14580 / DSM 13 / JCM 2505 / CCUG 7422 / NBRC 12200 / NCIMB 9375 / NCTC 10341 / NRRL NRS-1264 / Gibson 46)).